We begin with the raw amino-acid sequence, 47 residues long: Boigatoxin-A (47 aa).

Glutamine 1 bears the Pyrrolidone carboxylic acid mark. Intrachain disulfides connect cysteine 10–cysteine 34 and cysteine 13–cysteine 21.

As to quaternary structure, monomer. Expressed by the venom gland.

The protein localises to the secreted. This toxin may inhibit nicotinic acetylcholine receptor (nAChR). It has poorly reversible postsynaptic blocking activity in a chick muscle preparation and readily reversible inhibitory activity at a presynaptic site in the rat vas deferens prostatic segment most likely to prevent the release of neurotransmitters. In Boiga dendrophila (Mangrove snake), this protein is Boigatoxin-A.